We begin with the raw amino-acid sequence, 337 residues long: Calcium-binding protein 39-like (337 aa).

Belongs to the Mo25 family. As to quaternary structure, component of a trimeric complex composed of STK11/LKB1, STRAD (STRADA or STRADB) and CAB39/MO25 (CAB39/MO25alpha or CAB39L/MO25beta): the complex tethers STK11/LKB1 in the cytoplasm and stimulates its catalytic activity.

Component of a complex that binds and activates STK11/LKB1. In the complex, required to stabilize the interaction between CAB39/MO25 (CAB39/MO25alpha or CAB39L/MO25beta) and STK11/LKB1. The protein is Calcium-binding protein 39-like (CAB39L) of Homo sapiens (Human).